The sequence spans 423 residues: Cytochrome b mRNA maturase bI2 (423 aa).

Residues M1–N31 lie on the Mitochondrial matrix side of the membrane. The cytochrome b stretch occupies residues M1–G143. The helical transmembrane segment at M32–M52 threads the bilayer. Over H53–N84 the chain is Mitochondrial intermembrane. A helical membrane pass occupies residues G85–S105. Topologically, residues Y106–N115 are mitochondrial matrix. The chain crosses the membrane as a helical span at residues V116–Y136. Topologically, residues G137 to N153 are mitochondrial intermembrane. A maturase region spans residues N144–L423. The helical transmembrane segment at M154–M174 threads the bilayer. Topologically, residues M175–L423 are mitochondrial matrix.

It in the N-terminal section; belongs to the cytochrome b family. This sequence in the C-terminal section; belongs to the LAGLIDADG endonuclease family.

Its subcellular location is the mitochondrion inner membrane. Functionally, this protein is responsible for splicing and maturation of cytochrome b mRNA. Specifically, it may be responsible for the splicing specificity of the second intron. This is Cytochrome b mRNA maturase bI2 (BI2) from Saccharomyces cerevisiae (strain ATCC 204508 / S288c) (Baker's yeast).